Reading from the N-terminus, the 339-residue chain is Anthranilate phosphoribosyltransferase (339 aa).

Residues Gly-81, 84-85 (GD), Thr-89, 91-94 (NIST), 109-117 (KHGNRNLSS), and Ala-121 each bind 5-phospho-alpha-D-ribose 1-diphosphate. Gly-81 is a binding site for anthranilate. Ser-93 contributes to the Mg(2+) binding site. Asn-112 provides a ligand contact to anthranilate. Arg-167 contacts anthranilate. Mg(2+)-binding residues include Asp-226 and Glu-227.

Belongs to the anthranilate phosphoribosyltransferase family. Homodimer. Requires Mg(2+) as cofactor.

The catalysed reaction is N-(5-phospho-beta-D-ribosyl)anthranilate + diphosphate = 5-phospho-alpha-D-ribose 1-diphosphate + anthranilate. It participates in amino-acid biosynthesis; L-tryptophan biosynthesis; L-tryptophan from chorismate: step 2/5. In terms of biological role, catalyzes the transfer of the phosphoribosyl group of 5-phosphorylribose-1-pyrophosphate (PRPP) to anthranilate to yield N-(5'-phosphoribosyl)-anthranilate (PRA). The protein is Anthranilate phosphoribosyltransferase of Roseobacter denitrificans (strain ATCC 33942 / OCh 114) (Erythrobacter sp. (strain OCh 114)).